The sequence spans 426 residues: DNA polymerase processivity factor component A20 (426 aa).

The protein belongs to the poxviruses A20 family. As to quaternary structure, interacts with the DNA polymerase catalytic subunit E9. Interacts with UDG. Component of the Uracil-DNA glycosylase(UDG)-A20-polymerase complex; A20 and UDG form a heterodimeric processivity factor that associates with E9 to form the processive polymerase holoenzyme. Interacts with D5.

Plays an essential role in viral DNA replication by acting as the polymerase processivity factor together with protein D4. May serve as a bridge which links the DNA polymerase E9 and the uracil DNA glycosylase. The chain is DNA polymerase processivity factor component A20 from Vaccinia virus (strain Ankara) (VACV).